The sequence spans 597 residues: TOX high mobility group box family member 4 (597 aa).

Disordered stretches follow at residues 160–224 and 520–546; these read GAIL…EPQK and VQEE…SPQP. The segment covering 207–217 has biased composition (basic residues); that stretch reads KPKTPKKKKKK. A Nuclear localization signal motif is present at residues 212-217; sequence KKKKKK. The segment at residues 222-290 is a DNA-binding region (HMG box); the sequence is PQKPLSAYAL…EYLKALALYK (69 aa).

Component of the PNUTS-PP1 phosphatase complex.

It is found in the nucleus. Its subcellular location is the chromosome. Its function is as follows. Transcription factor that modulates cell fate reprogramming from the somatic state to the pluripotent and neuronal fate. Also acts as a regulatory component of protein phosphatase 1 (PP1) complexes. Component of the PNUTS-PP1 protein phosphatase complex, a PP1 complex that regulates RNA polymerase II transcription pause-release. PNUTS-PP1 also plays a role in the control of chromatin structure and cell cycle progression during the transition from mitosis into interphase. This chain is TOX high mobility group box family member 4 (tox4), found in Xenopus tropicalis (Western clawed frog).